The sequence spans 329 residues: Phenylalanine--tRNA ligase alpha subunit (329 aa).

Glutamate 246 serves as a coordination point for Mg(2+).

This sequence belongs to the class-II aminoacyl-tRNA synthetase family. Phe-tRNA synthetase alpha subunit type 1 subfamily. As to quaternary structure, tetramer of two alpha and two beta subunits. It depends on Mg(2+) as a cofactor.

It localises to the cytoplasm. It carries out the reaction tRNA(Phe) + L-phenylalanine + ATP = L-phenylalanyl-tRNA(Phe) + AMP + diphosphate + H(+). This is Phenylalanine--tRNA ligase alpha subunit from Helicobacter hepaticus (strain ATCC 51449 / 3B1).